A 1013-amino-acid polypeptide reads, in one-letter code: Putative DNA polymerase 060R (1013 aa).

It belongs to the DNA polymerase type-B family.

The enzyme catalyses DNA(n) + a 2'-deoxyribonucleoside 5'-triphosphate = DNA(n+1) + diphosphate. DNA-directed DNA polymerase involved in viral DNA replication. The sequence is that of Putative DNA polymerase 060R from Dryophytes versicolor (chameleon treefrog).